The following is a 538-amino-acid chain: Chaperonin GroEL (538 aa).

Residues Thr29–Pro32, Asp86–Thr90, Gly413, Asp479–Leu481, and Asp495 contribute to the ATP site.

The protein belongs to the chaperonin (HSP60) family. As to quaternary structure, forms a cylinder of 14 subunits composed of two heptameric rings stacked back-to-back. Interacts with the co-chaperonin GroES.

It localises to the cytoplasm. It carries out the reaction ATP + H2O + a folded polypeptide = ADP + phosphate + an unfolded polypeptide.. Together with its co-chaperonin GroES, plays an essential role in assisting protein folding. The GroEL-GroES system forms a nano-cage that allows encapsulation of the non-native substrate proteins and provides a physical environment optimized to promote and accelerate protein folding. The polypeptide is Chaperonin GroEL (Thermotoga petrophila (strain ATCC BAA-488 / DSM 13995 / JCM 10881 / RKU-1)).